A 183-amino-acid polypeptide reads, in one-letter code: Peptidyl-prolyl cis-trans isomerase H (183 aa).

Residues 19–182 (FFDVALGGEP…QDVVIIQCGE (164 aa)) enclose the PPIase cyclophilin-type domain.

The protein belongs to the cyclophilin-type PPIase family. PPIase H subfamily.

It localises to the nucleus. The enzyme catalyses [protein]-peptidylproline (omega=180) = [protein]-peptidylproline (omega=0). PPIases accelerate the folding of proteins. It catalyzes the cis-trans isomerization of proline imidic peptide bonds in oligopeptides. The protein is Peptidyl-prolyl cis-trans isomerase H (cyp3) of Emericella nidulans (strain FGSC A4 / ATCC 38163 / CBS 112.46 / NRRL 194 / M139) (Aspergillus nidulans).